A 572-amino-acid chain; its full sequence is Proline--tRNA ligase (572 aa).

It belongs to the class-II aminoacyl-tRNA synthetase family. ProS type 1 subfamily. As to quaternary structure, homodimer.

The protein localises to the cytoplasm. It catalyses the reaction tRNA(Pro) + L-proline + ATP = L-prolyl-tRNA(Pro) + AMP + diphosphate. Functionally, catalyzes the attachment of proline to tRNA(Pro) in a two-step reaction: proline is first activated by ATP to form Pro-AMP and then transferred to the acceptor end of tRNA(Pro). As ProRS can inadvertently accommodate and process non-cognate amino acids such as alanine and cysteine, to avoid such errors it has two additional distinct editing activities against alanine. One activity is designated as 'pretransfer' editing and involves the tRNA(Pro)-independent hydrolysis of activated Ala-AMP. The other activity is designated 'posttransfer' editing and involves deacylation of mischarged Ala-tRNA(Pro). The misacylated Cys-tRNA(Pro) is not edited by ProRS. This Salmonella dublin (strain CT_02021853) protein is Proline--tRNA ligase.